The primary structure comprises 122 residues: UPF0231 protein VF_2154 (122 aa).

The protein belongs to the UPF0231 family.

This chain is UPF0231 protein VF_2154, found in Aliivibrio fischeri (strain ATCC 700601 / ES114) (Vibrio fischeri).